A 471-amino-acid polypeptide reads, in one-letter code: Splicing factor 3A subunit 2 (471 aa).

Methionine 1 is subject to N-acetylmethionine. Residues 1 to 27 (MDFQHRPGGKTGSGGVASSSESNRDRR) form a disordered region. Lysine 10 carries the N6-acetyllysine modification. The segment at 54-84 (YECKLCLTLHNNEGSYLAHTQGKKHQTNLAR) adopts a Matrin-type zinc-finger fold. Serine 153 carries the phosphoserine modification. 4 stretches are compositionally biased toward pro residues: residues 217-295 (PPAP…PVVH), 303-316 (PPAP…PVVH), 324-383 (PPAP…PPPS), and 437-471 (HPQP…PPGN). The interval 217 to 471 (PPAPPSLPAG…GNMPPPPPGN (255 aa)) is disordered.

The protein belongs to the SF3A2 family. In terms of assembly, component of the 17S U2 SnRNP complex, a ribonucleoprotein complex that contains small nuclear RNA (snRNA) U2 and a number of specific proteins. Part of the SF3A subcomplex of the 17S U2 SnRNP complex which is composed of three subunits; SF3A3/SAP61, SF3A2/SAP62 and SF3A1/SAP114. SF3A associates with the splicing factor SF3B and a 12S RNA unit to form the mature 17S U2 small nuclear ribonucleoprotein complex (17S U2 snRNP). Identified in the spliceosome 'E' complex, a precursor of the spliceosome 'A' complex. Identified in the spliceosome 'A' and 'B' complexes. Identified in the spliceosome 'C' complex. Interacts with HTATSF1.

The protein resides in the nucleus. Component of the 17S U2 SnRNP complex of the spliceosome, a large ribonucleoprotein complex that removes introns from transcribed pre-mRNAs. The 17S U2 SnRNP complex (1) directly participates in early spliceosome assembly and (2) mediates recognition of the intron branch site during pre-mRNA splicing by promoting the selection of the pre-mRNA branch-site adenosine, the nucleophile for the first step of splicing. Within the 17S U2 SnRNP complex, SF3A2 is part of the SF3A subcomplex that contributes to the assembly of the 17S U2 snRNP, and the subsequent assembly of the pre-spliceosome 'E' complex and the pre-catalytic spliceosome 'A' complex. Involved in pre-mRNA splicing as a component of pre-catalytic spliceosome 'B' complexes, including the Bact complex. Interacts directly with the duplex formed by U2 snRNA and the intron. In Rattus norvegicus (Rat), this protein is Splicing factor 3A subunit 2 (Sf3a2).